The primary structure comprises 528 residues: Bifunctional dihydrofolate reductase-thymidylate synthase (528 aa).

The tract at residues 1-20 (MASELLANPTNGSGITRPDP) is disordered. Positions 23-200 (TYQVVVAATQ…IRYCFTTYVR (178 aa)) constitute a DHFR domain. A substrate-binding site is contributed by V27. Residues A29 and 35 to 41 (GIGKDGK) contribute to the NADP(+) site. D49 serves as a coordination point for substrate. Residues 73 to 75 (RKT) and 94 to 97 (LTRS) contribute to the NADP(+) site. Substrate contacts are provided by I136, Y142, and T157. 137–144 (GGGQIYRE) contributes to the NADP(+) binding site. The segment at 202–528 (RNSVAELTSQ…HQKIEMKMAV (327 aa)) is thymidylate synthase. R264 is a binding site for dUMP. C409 is an active-site residue. DUMP is bound by residues H410, 428–432 (QRSAD), N440, and 470–472 (HVY).

It in the N-terminal section; belongs to the dihydrofolate reductase family. In the C-terminal section; belongs to the thymidylate synthase family.

The enzyme catalyses (6S)-5,6,7,8-tetrahydrofolate + NADP(+) = 7,8-dihydrofolate + NADPH + H(+). It catalyses the reaction dUMP + (6R)-5,10-methylene-5,6,7,8-tetrahydrofolate = 7,8-dihydrofolate + dTMP. It functions in the pathway cofactor biosynthesis; tetrahydrofolate biosynthesis; 5,6,7,8-tetrahydrofolate from 7,8-dihydrofolate: step 1/1. Its function is as follows. Bifunctional enzyme. Involved in de novo dTMP biosynthesis. Key enzyme in folate metabolism. Can play two different roles depending on the source of dihydrofolate: de novo synthesis of tetrahydrofolate or recycling of the dihydrofolate released as one of the end products of the TS catalyzed reaction. Catalyzes an essential reaction for de novo glycine and purine synthesis, DNA precursor synthesis, and for the conversion of dUMP to dTMP. This chain is Bifunctional dihydrofolate reductase-thymidylate synthase, found in Daucus carota (Wild carrot).